Reading from the N-terminus, the 337-residue chain is Schlafen family member 1 (337 aa).

Positions 147-166 (AGGRSPSARPSDRPGDDTQE) are disordered. Over residues 156-166 (PSDRPGDDTQE) the composition is skewed to basic and acidic residues.

This sequence belongs to the Schlafen family. In terms of assembly, interacts with DNAJB6; promoting nuclear translocation and ability to promote cell-cycle arrest. In terms of tissue distribution, mainly expressed in the thymus, lymph node and spleen. Specifically expressed in T-lineage cells, but not in B-cells. Strongly up-regulated during the differentiation from CD4(+)CD8(+) double-positive (DP) to CD4(+) or CD8(+) single-positive (SP) thymocytes. Highly expressed in quiescent single-positive thymocytes and T-cells. The expression substantially decreases after TCR (T-cell receptor)-mediated activation.

The protein resides in the cytoplasm. It is found in the nucleus. Protein expressed in resting T-cells, which is required for maintaining T-cells in the quiescent state. Acts by promoting cell-cycle arrest of T-cells through inhibiting the expression of cyclin-D1 (CCND1). This chain is Schlafen family member 1, found in Mus musculus (Mouse).